Consider the following 188-residue polypeptide: Elongation factor P (188 aa).

Position 34 is an N6-(3,6-diaminohexanoyl)-5-hydroxylysine (Lys-34).

This sequence belongs to the elongation factor P family. May be beta-lysylated on the epsilon-amino group of Lys-34 by the combined action of EpmA and EpmB, and then hydroxylated on the C5 position of the same residue by EpmC (if this protein is present). Lysylation is critical for the stimulatory effect of EF-P on peptide-bond formation. The lysylation moiety may extend toward the peptidyltransferase center and stabilize the terminal 3-CCA end of the tRNA. Hydroxylation of the C5 position on Lys-34 may allow additional potential stabilizing hydrogen-bond interactions with the P-tRNA.

Its subcellular location is the cytoplasm. Its pathway is protein biosynthesis; polypeptide chain elongation. Involved in peptide bond synthesis. Alleviates ribosome stalling that occurs when 3 or more consecutive Pro residues or the sequence PPG is present in a protein, possibly by augmenting the peptidyl transferase activity of the ribosome. Modification of Lys-34 is required for alleviation. This Haemophilus influenzae (strain 86-028NP) protein is Elongation factor P.